A 296-amino-acid chain; its full sequence is 4-hydroxybenzoate octaprenyltransferase (296 aa).

A run of 8 helical transmembrane segments spans residues 28-48, 55-75, 102-122, 145-167, 174-196, 219-239, 241-261, and 275-295; these read PIGIYLLLWPTLVAVWIAGNG, VLIFALGVVLMRAAGCCINDF, AVMLFALLVGVSFLLVLCTNA, TYYPQVVLGAAYSWGIPMAFTAA, SAWLLYIANLLWTVGYDTYYAMV, VIILTLQLLSLGCLLLAGNRF, LGGWYHLGLLAAAACFAWEFW, and FLHNHWAGMLIFIGVVLDYAL.

This sequence belongs to the UbiA prenyltransferase family. Requires Mg(2+) as cofactor.

The protein resides in the cell inner membrane. The catalysed reaction is all-trans-octaprenyl diphosphate + 4-hydroxybenzoate = 4-hydroxy-3-(all-trans-octaprenyl)benzoate + diphosphate. Its pathway is cofactor biosynthesis; ubiquinone biosynthesis. In terms of biological role, catalyzes the prenylation of para-hydroxybenzoate (PHB) with an all-trans polyprenyl group. Mediates the second step in the final reaction sequence of ubiquinone-8 (UQ-8) biosynthesis, which is the condensation of the polyisoprenoid side chain with PHB, generating the first membrane-bound Q intermediate 3-octaprenyl-4-hydroxybenzoate. This Pseudomonas entomophila (strain L48) protein is 4-hydroxybenzoate octaprenyltransferase.